The following is a 41-amino-acid chain: Photosystem I reaction center subunit IX (41 aa).

The helical transmembrane segment at 7–27 threads the bilayer; that stretch reads YLSTAPVLLTIWLTFTAGFII.

It belongs to the PsaJ family.

It is found in the plastid. Its subcellular location is the chloroplast thylakoid membrane. Its function is as follows. May help in the organization of the PsaE and PsaF subunits. The protein is Photosystem I reaction center subunit IX of Phaeodactylum tricornutum (strain CCAP 1055/1).